The following is a 538-amino-acid chain: Bifunctional purine biosynthesis protein PurH (538 aa).

One can recognise an MGS-like domain in the interval 8 to 158 (IPAPDKVEIK…KNHAYVTILT (151 aa)).

This sequence belongs to the PurH family.

It catalyses the reaction (6R)-10-formyltetrahydrofolate + 5-amino-1-(5-phospho-beta-D-ribosyl)imidazole-4-carboxamide = 5-formamido-1-(5-phospho-D-ribosyl)imidazole-4-carboxamide + (6S)-5,6,7,8-tetrahydrofolate. The enzyme catalyses IMP + H2O = 5-formamido-1-(5-phospho-D-ribosyl)imidazole-4-carboxamide. It participates in purine metabolism; IMP biosynthesis via de novo pathway; 5-formamido-1-(5-phospho-D-ribosyl)imidazole-4-carboxamide from 5-amino-1-(5-phospho-D-ribosyl)imidazole-4-carboxamide (10-formyl THF route): step 1/1. Its pathway is purine metabolism; IMP biosynthesis via de novo pathway; IMP from 5-formamido-1-(5-phospho-D-ribosyl)imidazole-4-carboxamide: step 1/1. The polypeptide is Bifunctional purine biosynthesis protein PurH (Rhizobium etli (strain CIAT 652)).